Consider the following 359-residue polypeptide: Tropomodulin-1 (359 aa).

The segment at 36-61 (ELDPDNALLPAGLRQKDQTTKAPTGP) is disordered. Positions 39 to 138 (PDNALLPAGL…CDIAAILGMH (100 aa)) are tropomyosin-binding.

This sequence belongs to the tropomodulin family. As to quaternary structure, binds to the N-terminus of tropomyosin and to actin. Interacts with FLII.

It localises to the cytoplasm. The protein localises to the cytoskeleton. In terms of biological role, blocks the elongation and depolymerization of the actin filaments at the pointed end. The Tmod/TM complex contributes to the formation of the short actin protofilament, which in turn defines the geometry of the membrane skeleton. This Rattus norvegicus (Rat) protein is Tropomodulin-1 (Tmod1).